A 165-amino-acid chain; its full sequence is ATP synthase subunit delta, mitochondrial (165 aa).

The N-terminal 27 residues, 1–27 (MNSLRIARAALRVRPTAVRAPLQRRGY), are a transit peptide targeting the mitochondrion.

The protein belongs to the ATPase epsilon chain family. As to quaternary structure, F-type ATPases have 2 components, CF(1) - the catalytic core - and CF(0) - the membrane proton channel. CF(1) has five subunits: alpha(3), beta(3), gamma(1), delta(1), epsilon(1). CF(0) has three main subunits: a, b and c.

Its subcellular location is the mitochondrion. It is found in the mitochondrion inner membrane. Mitochondrial membrane ATP synthase (F(1)F(0) ATP synthase or Complex V) produces ATP from ADP in the presence of a proton gradient across the membrane which is generated by electron transport complexes of the respiratory chain. F-type ATPases consist of two structural domains, F(1) - containing the extramembraneous catalytic core, and F(0) - containing the membrane proton channel, linked together by a central stalk and a peripheral stalk. During catalysis, ATP turnover in the catalytic domain of F(1) is coupled via a rotary mechanism of the central stalk subunits to proton translocation. Part of the complex F(1) domain and of the central stalk which is part of the complex rotary element. Rotation of the central stalk against the surrounding alpha(3)beta(3) subunits leads to hydrolysis of ATP in three separate catalytic sites on the beta subunits. The polypeptide is ATP synthase subunit delta, mitochondrial (des) (Neurospora crassa (strain ATCC 24698 / 74-OR23-1A / CBS 708.71 / DSM 1257 / FGSC 987)).